Consider the following 347-residue polypeptide: Nicotinate-nucleotide--dimethylbenzimidazole phosphoribosyltransferase (347 aa).

Residue E316 is the Proton acceptor of the active site.

Belongs to the CobT family.

The enzyme catalyses 5,6-dimethylbenzimidazole + nicotinate beta-D-ribonucleotide = alpha-ribazole 5'-phosphate + nicotinate + H(+). It functions in the pathway nucleoside biosynthesis; alpha-ribazole biosynthesis; alpha-ribazole from 5,6-dimethylbenzimidazole: step 1/2. Functionally, catalyzes the synthesis of alpha-ribazole-5'-phosphate from nicotinate mononucleotide (NAMN) and 5,6-dimethylbenzimidazole (DMB). This Vibrio parahaemolyticus serotype O3:K6 (strain RIMD 2210633) protein is Nicotinate-nucleotide--dimethylbenzimidazole phosphoribosyltransferase.